We begin with the raw amino-acid sequence, 104 residues long: N(4)-acetylcytidine amidohydrolase (104 aa).

The region spanning 7-104 is the ASCH domain; the sequence is TFFTRFEQDI…FWVIAFELVD (98 aa). The active-site Proton acceptor is K21. The Nucleophile role is filled by T24. The active-site Proton donor is the E74.

It belongs to the N(4)-acetylcytidine amidohydrolase family.

It carries out the reaction N(4)-acetylcytidine + H2O = cytidine + acetate + H(+). The enzyme catalyses N(4)-acetyl-2'-deoxycytidine + H2O = 2'-deoxycytidine + acetate + H(+). The catalysed reaction is N(4)-acetylcytosine + H2O = cytosine + acetate + H(+). Catalyzes the hydrolysis of N(4)-acetylcytidine (ac4C). The protein is N(4)-acetylcytidine amidohydrolase of Pasteurella multocida (strain Pm70).